Consider the following 734-residue polypeptide: Photosystem I P700 chlorophyll a apoprotein A2 (734 aa).

Transmembrane regions (helical) follow at residues 46–69, 135–158, 175–199, 273–291, 330–353, 369–395, 417–439, and 517–535; these read IFAS…FHVA, LYTG…LHLQ, LNHH…HVAI, IAHH…GHMY, LHFQ…QHMY, AALY…IFFI, AITS…LYVH, and FLVH…LILV. Residues C559 and C568 each contribute to the [4Fe-4S] cluster site. Helical transmembrane passes span 575 to 596 and 643 to 665; these read AFYL…YWHW and LSVW…MFLI. The chlorophyll a site is built by H654, M662, and Y670. W671 contacts phylloquinone. Residues 707-727 traverse the membrane as a helical segment; sequence LVGLVHFSVGYIFTYAAFLIA.

Belongs to the PsaA/PsaB family. The PsaA/B heterodimer binds the P700 chlorophyll special pair and subsequent electron acceptors. PSI consists of a core antenna complex that captures photons, and an electron transfer chain that converts photonic excitation into a charge separation. The eukaryotic PSI reaction center is composed of at least 11 subunits. It depends on P700 is a chlorophyll a/chlorophyll a' dimer, A0 is one or more chlorophyll a, A1 is one or both phylloquinones and FX is a shared 4Fe-4S iron-sulfur center. as a cofactor.

The protein localises to the plastid. The protein resides in the chloroplast thylakoid membrane. The enzyme catalyses reduced [plastocyanin] + hnu + oxidized [2Fe-2S]-[ferredoxin] = oxidized [plastocyanin] + reduced [2Fe-2S]-[ferredoxin]. In terms of biological role, psaA and PsaB bind P700, the primary electron donor of photosystem I (PSI), as well as the electron acceptors A0, A1 and FX. PSI is a plastocyanin-ferredoxin oxidoreductase, converting photonic excitation into a charge separation, which transfers an electron from the donor P700 chlorophyll pair to the spectroscopically characterized acceptors A0, A1, FX, FA and FB in turn. Oxidized P700 is reduced on the lumenal side of the thylakoid membrane by plastocyanin. This is Photosystem I P700 chlorophyll a apoprotein A2 from Phalaenopsis aphrodite subsp. formosana (Moth orchid).